We begin with the raw amino-acid sequence, 118 residues long: Large ribosomal subunit protein bL20 (118 aa).

It belongs to the bacterial ribosomal protein bL20 family.

Binds directly to 23S ribosomal RNA and is necessary for the in vitro assembly process of the 50S ribosomal subunit. It is not involved in the protein synthesizing functions of that subunit. The chain is Large ribosomal subunit protein bL20 from Bacillus cytotoxicus (strain DSM 22905 / CIP 110041 / 391-98 / NVH 391-98).